A 610-amino-acid chain; its full sequence is Methionine--tRNA ligase (610 aa).

The short motif at 12-22 (PYANGPRHIGH) is the 'HIGH' region element. Residues cysteine 144, cysteine 147, cysteine 157, and cysteine 160 each coordinate Zn(2+). The 'KMSKS' region signature appears at 348 to 352 (KFSSS). ATP is bound at residue serine 351.

This sequence belongs to the class-I aminoacyl-tRNA synthetase family. MetG type 1 subfamily. Monomer. The cofactor is Zn(2+).

The protein localises to the cytoplasm. It catalyses the reaction tRNA(Met) + L-methionine + ATP = L-methionyl-tRNA(Met) + AMP + diphosphate. Is required not only for elongation of protein synthesis but also for the initiation of all mRNA translation through initiator tRNA(fMet) aminoacylation. The chain is Methionine--tRNA ligase from Corynebacterium glutamicum (strain R).